The following is a 226-amino-acid chain: ATP synthase F(0) complex subunit a (226 aa).

The next 6 helical transmembrane spans lie at 6–26 (FASF…IILF), 68–88 (WSLM…LGLL), 97–117 (QLSM…VMGF), 138–158 (IPML…ALAV), 164–184 (ITAG…LSTI), and 189–209 (TLII…VALI).

This sequence belongs to the ATPase A chain family. Component of the ATP synthase complex composed at least of ATP5F1A/subunit alpha, ATP5F1B/subunit beta, ATP5MC1/subunit c (homooctomer), MT-ATP6/subunit a, MT-ATP8/subunit 8, ATP5ME/subunit e, ATP5MF/subunit f, ATP5MG/subunit g, ATP5MK/subunit k, ATP5MJ/subunit j, ATP5F1C/subunit gamma, ATP5F1D/subunit delta, ATP5F1E/subunit epsilon, ATP5PF/subunit F6, ATP5PB/subunit b, ATP5PD/subunit d, ATP5PO/subunit OSCP. ATP synthase complex consists of a soluble F(1) head domain (subunits alpha(3) and beta(3)) - the catalytic core - and a membrane F(0) domain - the membrane proton channel (subunits c, a, 8, e, f, g, k and j). These two domains are linked by a central stalk (subunits gamma, delta, and epsilon) rotating inside the F1 region and a stationary peripheral stalk (subunits F6, b, d, and OSCP). Interacts with DNAJC30; interaction is direct.

Its subcellular location is the mitochondrion inner membrane. It carries out the reaction H(+)(in) = H(+)(out). Subunit a, of the mitochondrial membrane ATP synthase complex (F(1)F(0) ATP synthase or Complex V) that produces ATP from ADP in the presence of a proton gradient across the membrane which is generated by electron transport complexes of the respiratory chain. ATP synthase complex consist of a soluble F(1) head domain - the catalytic core - and a membrane F(1) domain - the membrane proton channel. These two domains are linked by a central stalk rotating inside the F(1) region and a stationary peripheral stalk. During catalysis, ATP synthesis in the catalytic domain of F(1) is coupled via a rotary mechanism of the central stalk subunits to proton translocation. With the subunit c (ATP5MC1), forms the proton-conducting channel in the F(0) domain, that contains two crucial half-channels (inlet and outlet) that facilitate proton movement from the mitochondrial intermembrane space (IMS) into the matrix. Protons are taken up via the inlet half-channel and released through the outlet half-channel, following a Grotthuss mechanism. The polypeptide is ATP synthase F(0) complex subunit a (Pan paniscus (Pygmy chimpanzee)).